The sequence spans 155 residues: Small ribosomal subunit protein uS7c (155 aa).

It belongs to the universal ribosomal protein uS7 family. As to quaternary structure, part of the 30S ribosomal subunit.

It is found in the plastid. The protein localises to the chloroplast. Its function is as follows. One of the primary rRNA binding proteins, it binds directly to 16S rRNA where it nucleates assembly of the head domain of the 30S subunit. The protein is Small ribosomal subunit protein uS7c (rps7) of Allium textile (Textile onion).